The chain runs to 740 residues: NAD(P)H-quinone oxidoreductase subunit 5, chloroplastic (740 aa).

The next 16 membrane-spanning stretches (helical) occupy residues 9–29 (WIIP…LLLI), 39–59 (IWAF…TKLA), 89–109 (IDPL…MVLI), 125–145 (FAYM…PNLI), 147–167 (IHIF…FWFT), 185–205 (GDFG…SFEF), 231–251 (AFLL…HVWL), 259–279 (TPIS…FLVA), 281–301 (LLPL…IGLI), 328–348 (LGYI…FHLI), 355–375 (ALLF…VGYS), 397–417 (TTFF…CFWS), 426–446 (WLYS…TAFY), 548–568 (TMLF…CIGI), 607–627 (FYSV…YGSV), and 719–739 (GRIS…LLLV).

The protein belongs to the complex I subunit 5 family. NDH is composed of at least 16 different subunits, 5 of which are encoded in the nucleus.

Its subcellular location is the plastid. The protein resides in the chloroplast thylakoid membrane. It carries out the reaction a plastoquinone + NADH + (n+1) H(+)(in) = a plastoquinol + NAD(+) + n H(+)(out). The enzyme catalyses a plastoquinone + NADPH + (n+1) H(+)(in) = a plastoquinol + NADP(+) + n H(+)(out). Functionally, NDH shuttles electrons from NAD(P)H:plastoquinone, via FMN and iron-sulfur (Fe-S) centers, to quinones in the photosynthetic chain and possibly in a chloroplast respiratory chain. The immediate electron acceptor for the enzyme in this species is believed to be plastoquinone. Couples the redox reaction to proton translocation, and thus conserves the redox energy in a proton gradient. This is NAD(P)H-quinone oxidoreductase subunit 5, chloroplastic (ndhF) from Nuphar advena (Common spatterdock).